Here is a 1215-residue protein sequence, read N- to C-terminus: RNA-dependent RNA polymerase 1 (1215 aa).

The protein belongs to the RdRP family. In terms of assembly, cid12, hrr1 and rdp1 interact forming the RNA-directed RNA polymerase complex (RDRC). The RDRC complex interacts with the RITS complex via interaction between ago1 and hrr1. Clr4 has a role in mediating this interaction.

It localises to the cytoplasm. The protein resides in the nucleus. It is found in the chromosome. The protein localises to the telomere. Its subcellular location is the centromere. The enzyme catalyses RNA(n) + a ribonucleoside 5'-triphosphate = RNA(n+1) + diphosphate. Functionally, has a role in the RNA interference (RNAi) pathway which is important for heterochromatin formation, accurate chromosome segregation, centromere cohesion and telomere function during mitosis and meiosis. Required for both post-transcriptional and transcriptional gene silencing. Required for silencing at the centromeres and for initiation of transcriptionally silent heterochromatin at the mating type locus. Promotes histone H3 'Lys-10' methylation necessary for centromere function. Required for recruitment of swi6 and cohesin to an ectopic dg repeat. A member of the RNA-directed RNA polymerase complex (RDRC) which is involved in the generation of small interfering RNAs (siRNAs) and mediates their association with the RNA-induced transcriptional silencing (RITS) complex. RITS acts as a priming complex for dsRNA synthesis at the site of non-coding centromeric RNA. Its RNA-dependent RNA polymerase activity is critical in siRNA production necessary for heterochromatin formation. This chain is RNA-dependent RNA polymerase 1 (rdp1), found in Schizosaccharomyces pombe (strain 972 / ATCC 24843) (Fission yeast).